The primary structure comprises 267 residues: Hydroxypyruvate/pyruvate aldolase Bphyt_5830 (267 aa).

The active-site Proton acceptor is the histidine 48. A divalent metal cation contacts are provided by glutamate 152 and aspartate 178.

It belongs to the HpcH/HpaI aldolase family. The cofactor is a divalent metal cation.

It catalyses the reaction D-glyceraldehyde + 3-hydroxypyruvate = 2-dehydro-D-galactonate. It carries out the reaction D-glyceraldehyde + 3-hydroxypyruvate = (3R,4S,5R)-3,4,5,6-tetrahydroxy-2-oxohexanoate. The enzyme catalyses D-glyceraldehyde + pyruvate = 2-dehydro-3-deoxy-L-galactonate. Aldolase which can catalyze in vitro the aldolisation reaction between hydroxypyruvate (HPA) or pyruvate (PA) and D-glyceraldehyde (D-GA). The condensation of hydroxypyruvate and D-glyceraldehyde produces 2-dehydro-D-galactonate as the major product and (3R,4S,5R)-3,4,5,6-tetrahydroxy-2-oxohexanoate. The condensation of pyruvate and D-glyceraldehyde produces 2-dehydro-3-deoxy-L-galactonate. The chain is Hydroxypyruvate/pyruvate aldolase Bphyt_5830 from Paraburkholderia phytofirmans (strain DSM 17436 / LMG 22146 / PsJN) (Burkholderia phytofirmans).